A 475-amino-acid polypeptide reads, in one-letter code: BICD family-like cargo adapter 2 (475 aa).

The stretch at 56–275 (ELGKALLERN…LKELQDELHM (220 aa)) forms a coiled coil. Composition is skewed to polar residues over residues 286–300 (HSSL…TAVQ) and 308–318 (SAETQSITSGY). The tract at residues 286–318 (HSSLHSEIQQSTAVQNHEKGRNSAETQSITSGY) is disordered. Residues 340–413 (RLQDQVTMQH…ESLNLQLLST (74 aa)) adopt a coiled-coil conformation. Low complexity predominate over residues 440–450 (QSQKQQETQKP). A disordered region spans residues 440-459 (QSQKQQETQKPPESPQNSFL).

The protein belongs to the BICDR family.

This chain is BICD family-like cargo adapter 2 (bicdl2), found in Xenopus tropicalis (Western clawed frog).